A 115-amino-acid polypeptide reads, in one-letter code: Large ribosomal subunit protein mL60 (115 aa).

A mitochondrion-targeting transit peptide spans 1–23 (MLGAFNSTLARFGGLVHKVPWRL). The disordered stretch occupies residues 88–115 (AGLQGFRKGVHKSPKWTRSTNRVNPTGF). Over residues 103–115 (WTRSTNRVNPTGF) the composition is skewed to polar residues.

It belongs to the mitochondrion-specific ribosomal protein mL60 family. As to quaternary structure, component of the mitochondrial large ribosomal subunit (mt-LSU). Mature yeast 74S mitochondrial ribosomes consist of a small (37S) and a large (54S) subunit. The 37S small subunit contains a 15S ribosomal RNA (15S mt-rRNA) and at least 32 different proteins. The 54S large subunit contains a 21S rRNA (21S mt-rRNA) and at least 45 different proteins.

The protein resides in the mitochondrion. In terms of biological role, component of the mitochondrial ribosome (mitoribosome), a dedicated translation machinery responsible for the synthesis of mitochondrial genome-encoded proteins, including at least some of the essential transmembrane subunits of the mitochondrial respiratory chain. The mitoribosomes are attached to the mitochondrial inner membrane and translation products are cotranslationally integrated into the membrane. This chain is Large ribosomal subunit protein mL60 (mrpl31), found in Schizosaccharomyces pombe (strain 972 / ATCC 24843) (Fission yeast).